Here is an 814-residue protein sequence, read N- to C-terminus: Rap guanine nucleotide exchange factor 5 (814 aa).

Residues L43 to S118 form the DEP domain. The N-terminal Ras-GEF domain occupies A301–G434. Residues N578–R813 enclose the Ras-GEF domain.

The protein localises to the nucleus. Its function is as follows. Guanine nucleotide exchange factor (GEF) for RAP1A, RAP2A and MRAS/M-Ras-GTP. Its association with MRAS inhibits Rap1 activation. In Mus musculus (Mouse), this protein is Rap guanine nucleotide exchange factor 5 (Rapgef5).